We begin with the raw amino-acid sequence, 599 residues long: Crinkler effector protein 8 (599 aa).

Positions 1-17 (MVTLFCAVVGVAGSTFP) are cleaved as a signal peptide. The LQLFLAK domain stretch occupies residues 18–52 (VDINENKSVGHLKKAIKEEKMYQFPADELQLFLAK). An N-linked (GlcNAc...) asparagine glycan is attached at N23. The DWL domain stretch occupies residues 53–109 (AGGNAWLSSLTEDVKKLKKGEKTALVKSLTQEEKELQGEDPISECLEGMDPPKVKQI). The HVLVXXP motif signature appears at 110-116 (HVLVALP). Positions 117–590 (PGTSSAPISD…EAAEQESQGK (474 aa)) are C-terminal D2 effector domain. S249, S281, and S385 each carry phosphoserine. Residues 289 to 590 (LSKKLVWSYG…EAAEQESQGK (302 aa)) enclose the Protein kinase domain. The Proton acceptor role is filled by D470. S474 and S587 each carry phosphoserine. Positions 577-599 (RFEREAAEQESQGKGVRKKHRRA) are disordered. The Host nuclear localization signal motif lies at 590 to 599 (KGVRKKHRRA).

This sequence in the N-terminal section; belongs to the Crinkler effector family. In the C-terminal section; belongs to the protein kinase superfamily. As to quaternary structure, dimerizes in host plants. Autophosphorylated at Ser-249, Ser-281, Ser-385, Ser-474 and Ser-587. Additional serines or threonines are also targeted for phosphorylation.

The protein localises to the secreted. It is found in the host nucleus. It catalyses the reaction L-seryl-[protein] + ATP = O-phospho-L-seryl-[protein] + ADP + H(+). The catalysed reaction is L-threonyl-[protein] + ATP = O-phospho-L-threonyl-[protein] + ADP + H(+). Functionally, secreted effector that induces cell death when expressed in host plants. Acts as a kinase and is able to autophosphorylate, however its cell death inducing ability is not a direct result of its kinase activity, but rather a consequence of the phosphorylated state of the five identified serine residues in the CRN8 protein. The polypeptide is Crinkler effector protein 8 (Phytophthora infestans (Potato late blight agent)).